Consider the following 304-residue polypeptide: Mas-related G-protein coupled receptor member A1 (304 aa).

The Extracellular segment spans residues 1-17 (MDNTIPGGINITILIPN). N10 carries an N-linked (GlcNAc...) asparagine glycan. The helical transmembrane segment at 18 to 38 (LMIIIFGLVGLTGNGIVFWLL) threads the bilayer. Residues 39–53 (GFCLHRNAFSVYILN) are Cytoplasmic-facing. A helical membrane pass occupies residues 54-74 (LALADFFFLLGHIIDSILLLL). A topological domain (extracellular) is located at residue N75. A helical transmembrane segment spans residues 76 to 96 (VFYPITFLLCFYTIMMVLYIA). The Cytoplasmic portion of the chain corresponds to 97 to 131 (GLSMLSAISTERCLSVLCPIWYHCHRPEHTSTVMC). Residues 132–152 (AVIWVLSLLICILNSYFCGFL) traverse the membrane as a helical segment. Residues 153–166 (NTQYKNENGCLALN) are Extracellular-facing. A helical transmembrane segment spans residues 167–187 (FFTAAYLMFLFVVLCLSSLAL). Topologically, residues 188-206 (VARLFCGTGQIKLTRLYVT) are cytoplasmic. A helical transmembrane segment spans residues 207–227 (IILSILVFLLCGLPFGIHWFL). Residues 228 to 243 (LFKIKDDFHVFDLGFY) are Extracellular-facing. Residues 244 to 264 (LASVVLTAINSCANPIIYFFV) traverse the membrane as a helical segment. Residues 265–304 (GSFRHRLKHQTLKMVLQNALQDTPETAKIMVEMSRSKSEP) are Cytoplasmic-facing.

It belongs to the G-protein coupled receptor 1 family. Mas subfamily. Expressed in a subset of sensory neurons that includes nociceptors. Expressed in the subclass of non-peptidergic sensory neurons that are IB4(+) and VR1(-).

It localises to the cell membrane. Orphan receptor activated by a subset of RFamide-family neuropeptides such as FLRF-amide and FMRF-amide. Mediates its action by association with G proteins that activate a phosphatidylinositol-calcium second messenger system. Its effect is mediated by G(q) and G(11) proteins. May regulate the function of nociceptive neurons by modulation of pain perception. The sequence is that of Mas-related G-protein coupled receptor member A1 (Mrgpra1) from Mus musculus (Mouse).